A 521-amino-acid polypeptide reads, in one-letter code: BAR/IMD domain-containing adapter protein 2 (521 aa).

An IMD domain is found at 1 to 250 (MSLSRSEEMH…VQLMQQMGNS (250 aa)). Residues 132-153 (DALDKCQAELKKLRKKSQGSKN) adopt a coiled-coil conformation. Phosphoserine occurs at positions 262, 324, 326, and 337. The segment at 297–370 (APVMNGVSGP…TLPRSSSMAA (74 aa)) is disordered. Positions 321–333 (QPKSTSPPQSQSK) are enriched in low complexity. Threonine 341 is subject to Phosphothreonine. Serine 347 bears the Phosphoserine mark. Residues 353–368 (SYATTENKTLPRSSSM) are compositionally biased toward polar residues. At threonine 361 the chain carries Phosphothreonine. A phosphoserine mark is found at serine 367, serine 385, serine 396, and serine 455. In terms of domain architecture, SH3 spans 375–438 (NGRMRVKAIF…PFSYTRVLDN (64 aa)). The disordered stretch occupies residues 450–471 (QGKSSSTGNLLDKEDLALPPPD).

Homodimer. Interacts with CDC42 and RAC1 that have been activated by GTP binding. Interacts with ATN1, ADGRB1, DIAPH1, EPS8, SHANK1, SHANK2, SHANK3, TIAM1, WASF1 and WASF2. Interacts with ENAH after recruitment of CDC42. In terms of processing, phosphorylated on tyrosine residues by INSR in response to insulin treatment.

Its subcellular location is the cytoplasm. The protein localises to the membrane. It localises to the cell projection. The protein resides in the filopodium. It is found in the ruffle. Its subcellular location is the cytoskeleton. Functionally, adapter protein that links membrane-bound small G-proteins to cytoplasmic effector proteins. Necessary for CDC42-mediated reorganization of the actin cytoskeleton and for RAC1-mediated membrane ruffling. Involved in the regulation of the actin cytoskeleton by WASF family members and the Arp2/3 complex. Plays a role in neurite growth. Acts syngeristically with ENAH to promote filipodia formation. Plays a role in the reorganization of the actin cytoskeleton in response to bacterial infection. Participates in actin bundling when associated with EPS8, promoting filopodial protrusions. The chain is BAR/IMD domain-containing adapter protein 2 (BAIAP2) from Bos taurus (Bovine).